A 344-amino-acid chain; its full sequence is 3,4-dihydroxy-2-butanone 4-phosphate synthase (344 aa).

The DHBP synthase stretch occupies residues 1–202 (MILKRVTEAL…VSDLISYRLE (202 aa)). Residues 27–28 (RE), Asp-32, 139–143 (RTGHT), and Glu-163 each bind D-ribulose 5-phosphate. Glu-28 contacts Mg(2+). His-142 lines the Mg(2+) pocket. Positions 203–344 (NESLLKMFCQ…GLKLVETISL (142 aa)) are GTP cyclohydrolase II-like.

This sequence in the N-terminal section; belongs to the DHBP synthase family. In the C-terminal section; belongs to the GTP cyclohydrolase II family. Requires Mg(2+) as cofactor. Mn(2+) serves as cofactor.

The enzyme catalyses D-ribulose 5-phosphate = (2S)-2-hydroxy-3-oxobutyl phosphate + formate + H(+). Its pathway is cofactor biosynthesis; riboflavin biosynthesis; 2-hydroxy-3-oxobutyl phosphate from D-ribulose 5-phosphate: step 1/1. Its function is as follows. Catalyzes the conversion of D-ribulose 5-phosphate to formate and 3,4-dihydroxy-2-butanone 4-phosphate. This Helicobacter pylori (strain ATCC 700392 / 26695) (Campylobacter pylori) protein is 3,4-dihydroxy-2-butanone 4-phosphate synthase (ribB).